Reading from the N-terminus, the 323-residue chain is Aquaporin-4 (323 aa).

At 1–36 (MSDGAAARRWGKCGHSCSRESIMVAFKGVWTQAFWK) the chain is on the cytoplasmic side. 2 S-palmitoyl cysteine lipidation sites follow: C13 and C17. Residues 37–57 (AVSAEFLATLIFVLLGVGSTI) form a helical membrane-spanning segment. The Extracellular portion of the chain corresponds to 58–69 (NWGGSENPLPVD). The helical transmembrane segment at 70-89 (MVLISLCFGLSIATMVQCFG) threads the bilayer. At 90–93 (HISG) the chain is on the cytoplasmic side. The segment at residues 94–101 (GHINPAVT) is an intramembrane region (discontinuously helical). The short motif at 97-99 (NPA) is the NPA 1 element. Over 102–115 (VAMVCTRKISIAKS) the chain is Cytoplasmic. The residue at position 111 (S111) is a Phosphoserine; by PKG. A helical membrane pass occupies residues 116-136 (VFYIIAQCLGAIIGAGILYLV). Residues 137-155 (TPPSVVGGLGVTTVHGNLT) lie on the Extracellular side of the membrane. A glycan (N-linked (GlcNAc...) asparagine) is linked at N153. The helical transmembrane segment at 156–176 (AGHGLLVELIITFQLVFTIFA) threads the bilayer. Topologically, residues 177 to 184 (SCDSKRTD) are cytoplasmic. S180 carries the post-translational modification Phosphoserine; by PKC. The helical transmembrane segment at 185–205 (VTGSIALAIGFSVAIGHLFAI) threads the bilayer. N206 carries N-linked (GlcNAc...) asparagine glycosylation. Residues 206–208 (NYT) are Extracellular-facing. The discontinuously helical intramembrane region spans 209–222 (GASMNPARSFGPAV). The short motif at 213 to 215 (NPA) is the NPA 2 element. Topologically, residues 223–231 (IMGNWANHW) are extracellular. A helical transmembrane segment spans residues 232-252 (IYWVGPIMGAVLAGALYEYVF). The Cytoplasmic portion of the chain corresponds to 253–323 (CPDVELKRRL…DSSGEVLSSV (71 aa)). Phosphoserine is present on residues S276 and S285. Phosphothreonine is present on T289. S321 carries the phosphoserine modification.

The protein belongs to the MIP/aquaporin (TC 1.A.8) family. Homotetramer. The tetramers can form oligomeric arrays in membranes. The size of the oligomers differs between tissues and is smaller in skeletal muscle than in brain. Interaction between AQP4 oligomeric arrays in close-by cells can contribute to cell-cell adhesion. Part of a complex containing MLC1, TRPV4, HEPACAM and ATP1B1. Post-translationally, phosphorylation by PKC at Ser-180 reduces conductance by 50%. Phosphorylation by PKG at Ser-111 in response to glutamate increases conductance by 40%; this increase is not due to increased presence at the cell membrane. Isoform 2: Palmitoylated on its N-terminal region. Isoform 1: Not palmitoylated. Detected in brain cortex, especially around cortical blood vessels, and subjacent to pia, with lower levels in parenchymal membranes. Detected in ependymal and astroglial cells in brain. Detected in supporting Hensen's cells, inner sulcus cells and Claudius cells in the inner ear. Detected in skeletal muscle. Detected in gastric parietal cells. Detected in principal cells in collecting ducts in kidney medulla (at protein level). Detected in brain, heart and skeletal muscle.

It is found in the cell membrane. It localises to the basolateral cell membrane. The protein localises to the endosome membrane. The protein resides in the sarcolemma. Its subcellular location is the cell projection. It catalyses the reaction H2O(in) = H2O(out). Its function is as follows. Forms a water-specific channel. Plays an important role in brain water homeostasis and in glymphatic solute transport. Required for a normal rate of water exchange across the blood brain interface. Required for normal levels of cerebrospinal fluid influx into the brain cortex and parenchyma along paravascular spaces that surround penetrating arteries, and for normal drainage of interstitial fluid along paravenous drainage pathways. Thereby, it is required for normal clearance of solutes from the brain interstitial fluid, including soluble beta-amyloid peptides derived from APP. Plays a redundant role in urinary water homeostasis and urinary concentrating ability. The sequence is that of Aquaporin-4 (Aqp4) from Mus musculus (Mouse).